The sequence spans 447 residues: Acetylornithine deacetylase (447 aa).

His-103 is a Zn(2+) binding site. Asp-105 is a catalytic residue. Position 135 (Asp-135) interacts with Zn(2+). Glu-169 (proton acceptor) is an active-site residue. Zn(2+)-binding residues include Glu-170 and His-419.

The protein belongs to the peptidase M20A family. ArgE subfamily. As to quaternary structure, homodimer. It depends on Zn(2+) as a cofactor. Co(2+) is required as a cofactor.

The catalysed reaction is N(2)-acetyl-L-ornithine + H2O = L-ornithine + acetate. It functions in the pathway amino-acid biosynthesis; L-arginine biosynthesis; L-ornithine from N(2)-acetyl-L-ornithine (linear): step 1/1. This chain is Acetylornithine deacetylase (argE), found in Dictyostelium discoideum (Social amoeba).